Consider the following 328-residue polypeptide: Lipoyl synthase (328 aa).

[4Fe-4S] cluster is bound by residues C56, C61, C67, C82, C86, C89, and S293. Residues 68–282 (WEDREATFLI…ERVGAELGFS (215 aa)) form the Radical SAM core domain.

This sequence belongs to the radical SAM superfamily. Lipoyl synthase family. [4Fe-4S] cluster is required as a cofactor.

Its subcellular location is the cytoplasm. It catalyses the reaction [[Fe-S] cluster scaffold protein carrying a second [4Fe-4S](2+) cluster] + N(6)-octanoyl-L-lysyl-[protein] + 2 oxidized [2Fe-2S]-[ferredoxin] + 2 S-adenosyl-L-methionine + 4 H(+) = [[Fe-S] cluster scaffold protein] + N(6)-[(R)-dihydrolipoyl]-L-lysyl-[protein] + 4 Fe(3+) + 2 hydrogen sulfide + 2 5'-deoxyadenosine + 2 L-methionine + 2 reduced [2Fe-2S]-[ferredoxin]. The protein operates within protein modification; protein lipoylation via endogenous pathway; protein N(6)-(lipoyl)lysine from octanoyl-[acyl-carrier-protein]: step 2/2. Catalyzes the radical-mediated insertion of two sulfur atoms into the C-6 and C-8 positions of the octanoyl moiety bound to the lipoyl domains of lipoate-dependent enzymes, thereby converting the octanoylated domains into lipoylated derivatives. The polypeptide is Lipoyl synthase (Frankia alni (strain DSM 45986 / CECT 9034 / ACN14a)).